Consider the following 356-residue polypeptide: Histidinol-phosphate aminotransferase (356 aa).

Lys214 carries the N6-(pyridoxal phosphate)lysine modification.

It belongs to the class-II pyridoxal-phosphate-dependent aminotransferase family. Histidinol-phosphate aminotransferase subfamily. Homodimer. It depends on pyridoxal 5'-phosphate as a cofactor.

It catalyses the reaction L-histidinol phosphate + 2-oxoglutarate = 3-(imidazol-4-yl)-2-oxopropyl phosphate + L-glutamate. Its pathway is amino-acid biosynthesis; L-histidine biosynthesis; L-histidine from 5-phospho-alpha-D-ribose 1-diphosphate: step 7/9. The sequence is that of Histidinol-phosphate aminotransferase from Escherichia coli O8 (strain IAI1).